A 564-amino-acid chain; its full sequence is E3 ubiquitin-protein ligase RNF168 (564 aa).

The RING-type zinc finger occupies 16-55 (CGICMEILVEPVTLPCNHTLCNPCFQSTVEKANLCCPFCR). S70 is modified (phosphoserine). The short motif at 110 to 128 (LSKPGELRREYEEEISKVE) is the LR motif 1 element. A Phosphoserine modification is found at S134. Positions 143–151 (EEYIQRLLA) match the UMI motif motif. Disordered regions lie at residues 149 to 179 (LLAEEEEEEKRRTERRRSEMEEQLRGDEELA) and 193 to 291 (NILA…QGPE). Residues 157–179 (EKRRTERRRSEMEEQLRGDEELA) show a composition bias toward basic and acidic residues. Residues 168–191 (MEEQLRGDEELARRLSTSINSNYE) carry the MIU motif 1 motif. The residue at position 197 (S197) is a Phosphoserine. K210 is covalently cross-linked (Glycyl lysine isopeptide (Lys-Gly) (interchain with G-Cter in SUMO2)). Over residues 242 to 259 (KTEHGEDMCKSKETDSSD) the composition is skewed to basic and acidic residues. The span at 275 to 288 (PTHSPQTCPETQGQ) shows a compositional bias: polar residues. Residues T348 and T361 each carry the phosphothreonine modification. A phosphoserine mark is found at S413 and S414. Positions 438 to 461 (RHKQEEQDRLLALQLQKEADKEKM) match the MIU motif 2 motif. The disordered stretch occupies residues 455–564 (EADKEKMVPN…QKSILQMFQR (110 aa)). The LR motif 2 motif lies at 465-476 (RQKGSPDQYQLR). Residues 466 to 480 (QKGSPDQYQLRTSSP) are compositionally biased toward polar residues. S469 is subject to Phosphoserine. The segment covering 491–515 (NVKDRNSPKQTADRSKSQRSRKGEY) has biased composition (basic and acidic residues). Composition is skewed to polar residues over residues 519–531 (FESTWKGSVNGTK) and 555–564 (QKSILQMFQR). Residue K524 forms a Glycyl lysine isopeptide (Lys-Gly) (interchain with G-Cter in SUMO2) linkage.

The protein belongs to the RNF168 family. As to quaternary structure, monomer. Interacts with UBE2N/UBC13. In terms of processing, sumoylated with SUMO1 by PIAS4 in response to double-strand breaks (DSBs). Ubiquitinated.

It localises to the nucleus. It catalyses the reaction S-ubiquitinyl-[E2 ubiquitin-conjugating enzyme]-L-cysteine + [acceptor protein]-L-lysine = [E2 ubiquitin-conjugating enzyme]-L-cysteine + N(6)-ubiquitinyl-[acceptor protein]-L-lysine.. It participates in protein modification; protein ubiquitination. Functionally, E3 ubiquitin-protein ligase required for accumulation of repair proteins to sites of DNA damage. Acts with UBE2N/UBC13 to amplify the RNF8-dependent histone ubiquitination. Recruited to sites of DNA damage at double-strand breaks (DSBs) by binding to ubiquitinated histone H2A and H2AX and amplifies the RNF8-dependent H2A ubiquitination, promoting the formation of 'Lys-63'-linked ubiquitin conjugates. This leads to concentrate ubiquitinated histones H2A and H2AX at DNA lesions to the threshold required for recruitment of TP53BP1 and BRCA1. Also recruited at DNA interstrand cross-links (ICLs) sites and promotes accumulation of 'Lys-63'-linked ubiquitination of histones H2A and H2AX, leading to recruitment of FAAP20 and Fanconi anemia (FA) complex, followed by interstrand cross-link repair. H2A ubiquitination also mediates the ATM-dependent transcriptional silencing at regions flanking DSBs in cis, a mechanism to avoid collision between transcription and repair intermediates. Also involved in class switch recombination in immune system, via its role in regulation of DSBs repair. Following DNA damage, promotes the ubiquitination and degradation of JMJD2A/KDM4A in collaboration with RNF8, leading to unmask H4K20me2 mark and promote the recruitment of TP53BP1 at DNA damage sites. Not able to initiate 'Lys-63'-linked ubiquitination in vitro; possibly due to partial occlusion of the UBE2N/UBC13-binding region. Catalyzes monoubiquitination of 'Lys-13' and 'Lys-15' of nucleosomal histone H2A (H2AK13Ub and H2AK15Ub, respectively). The polypeptide is E3 ubiquitin-protein ligase RNF168 (Rattus norvegicus (Rat)).